Here is a 777-residue protein sequence, read N- to C-terminus: Protein argonaute (777 aa).

The interval 1-107 (MAPVQAADEM…ARLDDALEEA (107 aa)) is N-terminal domain. The tract at residues 108–182 (LPKYAAVKKR…TIGMRYDIEA (75 aa)) is linker L1. The tract at residues 183-243 (SLRDLLEAGI…VNVNDAKLEG (61 aa)) is PAZ domain. The linker L2 stretch occupies residues 244–341 (SKENFTRCLS…DRTGAKSAEY (98 aa)). The segment at 342–509 (AWRGLSQFGP…SIATYAKLNG (168 aa)) is mid domain. The 313-residue stretch at 445–757 (GIVVLFEDHA…IAELLGRLKS (313 aa)) folds into the Piwi domain. Residues 510–777 (TPWTVNHDKA…IKLKWSRWFL (268 aa)) form a PIWI domain region. Leu-777 provides a ligand contact to Mg(2+).

The protein belongs to the argonaute family. Long pAgo subfamily. Mg(2+) serves as cofactor.

Functionally, a catalytically inactive argonaute protein. Binds 5'-phosphorylated RNA as the guide (gRNA) and short DNA as target DNA (tDNA); does not bind other nucleic acid combinations, does not bind tDNA alone. Has highest affinity for gRNA that begins with 5'-phospho-U and poor affinity for gRNA with 5'-OH. Upon expression in E.coli, plasmid sequences are found in RsAgo, its induction leads to plasmid degradation and suppression of genes encoded on foreign plasmids, suggesting it may also interfere with transcription. Does not interact with preformed gRNA:tDNA duplexes. Mismatches and nt bulges are tolerated in the ternary complex, however, they significantly reduce the affinity of RsAgo:gRNA for tDNA. Mismatched tDNA can cause dissociation of gRNA from RsAgo. In situ binds 2 populations of RNA (15-19 and 45 nucleotides, nt) and a population of ssDNA 22-24 nt in length. The small sense RNA is probably derived from mRNA degradation and strongly enriched for U in the first and U/C in the second positions. The small DNA is enriched for sequences complementary to the RNA, with 3 nt overhangs on both ends; another nuclease may trim the ends. The sequences are largely derived from exogenous plasmids or genome-encoded foreign elements such as prophages and transposons. Forms a ternary complex with gRNA and double-stranded tDNA only when the tDNA is open. This chain is Protein argonaute, found in Cereibacter sphaeroides (strain ATCC 17025 / ATH 2.4.3) (Rhodobacter sphaeroides).